We begin with the raw amino-acid sequence, 157 residues long: ATP synthase subunit b (157 aa).

The helical transmembrane segment at 7–27 (LIAQLVVFFILAWFTMKFVWP) threads the bilayer.

This sequence belongs to the ATPase B chain family. In terms of assembly, F-type ATPases have 2 components, F(1) - the catalytic core - and F(0) - the membrane proton channel. F(1) has five subunits: alpha(3), beta(3), gamma(1), delta(1), epsilon(1). F(0) has three main subunits: a(1), b(2) and c(10-14). The alpha and beta chains form an alternating ring which encloses part of the gamma chain. F(1) is attached to F(0) by a central stalk formed by the gamma and epsilon chains, while a peripheral stalk is formed by the delta and b chains.

It localises to the cell inner membrane. Its function is as follows. F(1)F(0) ATP synthase produces ATP from ADP in the presence of a proton or sodium gradient. F-type ATPases consist of two structural domains, F(1) containing the extramembraneous catalytic core and F(0) containing the membrane proton channel, linked together by a central stalk and a peripheral stalk. During catalysis, ATP synthesis in the catalytic domain of F(1) is coupled via a rotary mechanism of the central stalk subunits to proton translocation. In terms of biological role, component of the F(0) channel, it forms part of the peripheral stalk, linking F(1) to F(0). The chain is ATP synthase subunit b from Azoarcus sp. (strain BH72).